The following is a 2282-amino-acid chain: Cation channel sperm-associated targeting subunit tau (2282 aa).

Residues 1–118 (MELPPPGNRR…RGKGKGTGTR (118 aa)) are disordered. Polar residues-rich tracts occupy residues 11 to 41 (VSIN…SLKR) and 50 to 87 (MMSN…NLSS). The segment covering 90–109 (YADEEGKPLTDKNKDKDKGR) has biased composition (basic and acidic residues). A C2 domain is found at 131–266 (QSDEMAIANQ…IQKGCFTEVM (136 aa)). Disordered regions lie at residues 397–416 (MTKR…SSAL), 656–679 (EHED…TWAE), 747–1066 (NKLI…SHDP), 1104–1153 (SAKS…DKQS), 1217–1240 (YTND…TDDR), 1426–1445 (NSLL…DSRS), 1452–1515 (RQNT…SLDK), 1542–1569 (ERRQ…LEKT), 1908–1928 (NQAN…LKKQ), and 2187–2222 (PKKS…EPNK). Polar residues-rich tracts occupy residues 750–760 (ITDSSFNTTKP), 783–792 (SDPSSNTTKP), 800–841 (DPSS…SDLN), 849–858 (IVSTISSDPN), and 953–974 (SARS…TKLS). A compositionally biased stretch (low complexity) spans 1104-1123 (SAKSLDSNNSSASSSPTVNS). Over residues 1124–1136 (DTTTNAAEPSGTK) the composition is skewed to polar residues. Composition is skewed to polar residues over residues 1452–1466 (RQNT…SSVS) and 1473–1482 (DCQSISTQES). The segment covering 1484–1493 (YPVRDTKSDS) has biased composition (basic and acidic residues). A compositionally biased stretch (acidic residues) spans 1495–1504 (NDTEEMELDS). Basic and acidic residues-rich tracts occupy residues 1542–1555 (ERRQ…ESLI) and 1916–1925 (SPERPSDISL).

As to quaternary structure, component of the CatSper complex or CatSpermasome composed of the core pore-forming members CATSPER1, CATSPER2, CATSPER3 and CATSPER4 as well as auxiliary members CATSPERB, CATSPERG, CATSPERD, CATSPERE, CATSPERZ, C2CD6/CATSPERT, SLCO6C1, TMEM249, TMEM262 and EFCAB9. HSPA1 may be an additional auxiliary complex member. The core complex members CATSPER1, CATSPER2, CATSPER3 and CATSPER4 form a heterotetrameric channel. The auxiliary CATSPERB, CATSPERG, CATSPERD and CATSPERE subunits form a pavilion-like structure over the pore which stabilizes the complex through interactions with CATSPER4, CATSPER3, CATSPER1 and CATSPER2 respectively. SLCO6C1 interacts with CATSPERE and TMEM262/CATSPERH interacts with CATSPERB, further stabilizing the complex. C2CD6/CATSPERT interacts at least with CATSPERD and is required for targeting the CatSper complex in the flagellar membrane. Expressed in cauda sperm (at protein level).

Its subcellular location is the cell projection. It is found in the cilium. The protein localises to the flagellum membrane. Auxiliary component of the CatSper complex, a complex involved in sperm cell hyperactivation. Sperm cell hyperactivation is needed for sperm motility which is essential late in the preparation of sperm for fertilization. Required for CatSper complex targeting and trafficking into the quadrilinear nanodomains. Targets the preassembled CatSper complexes to elongating flagella, where it links the channel-carrying vesicles and motor proteins. This Mus musculus (Mouse) protein is Cation channel sperm-associated targeting subunit tau.